Here is a 270-residue protein sequence, read N- to C-terminus: Formamidopyrimidine-DNA glycosylase (270 aa).

The Schiff-base intermediate with DNA role is filled by proline 2. Residue glutamate 3 is the Proton donor of the active site. Lysine 58 acts as the Proton donor; for beta-elimination activity in catalysis. Residues histidine 92, arginine 111, and arginine 153 each contribute to the DNA site. An FPG-type zinc finger spans residues 238-270 (SVYGASVCPVCGGALRQIRLAQRGTWFCPRCQR). Arginine 260 (proton donor; for delta-elimination activity) is an active-site residue.

Belongs to the FPG family. As to quaternary structure, monomer. The cofactor is Zn(2+).

The catalysed reaction is Hydrolysis of DNA containing ring-opened 7-methylguanine residues, releasing 2,6-diamino-4-hydroxy-5-(N-methyl)formamidopyrimidine.. The enzyme catalyses 2'-deoxyribonucleotide-(2'-deoxyribose 5'-phosphate)-2'-deoxyribonucleotide-DNA = a 3'-end 2'-deoxyribonucleotide-(2,3-dehydro-2,3-deoxyribose 5'-phosphate)-DNA + a 5'-end 5'-phospho-2'-deoxyribonucleoside-DNA + H(+). Involved in base excision repair of DNA damaged by oxidation or by mutagenic agents. Acts as a DNA glycosylase that recognizes and removes damaged bases. Has a preference for oxidized purines, such as 7,8-dihydro-8-oxoguanine (8-oxoG). Has AP (apurinic/apyrimidinic) lyase activity and introduces nicks in the DNA strand. Cleaves the DNA backbone by beta-delta elimination to generate a single-strand break at the site of the removed base with both 3'- and 5'-phosphates. The protein is Formamidopyrimidine-DNA glycosylase of Halorhodospira halophila (strain DSM 244 / SL1) (Ectothiorhodospira halophila (strain DSM 244 / SL1)).